We begin with the raw amino-acid sequence, 586 residues long: Clathrin heavy chain linker domain-containing protein 1 (586 aa).

Residues 174–232 (MNLDALTKYMKHLEDKYAEIKQAMLIKYVPAQRKSDLDEEMIVLLKRRDVAENLNRKLQ) adopt a coiled-coil conformation.

This is Clathrin heavy chain linker domain-containing protein 1 (CLHC1) from Macaca fascicularis (Crab-eating macaque).